The following is an 802-amino-acid chain: Mitochondrial inner membrane m-AAA protease component AFG3L2 (802 aa).

The transit peptide at 1 to 38 directs the protein to the mitochondrion; it reads MAHRCLLLWSRGGCRRGLPPLLVPRGCLGPDRRPCLRT. Residues 39–66 constitute a propeptide, removed in mature form; it reads LYQYATVQTASSRRSLLRDVIAAYQRFC. Positions 76 to 124 are disordered; sequence YFPNGKNGKKASEPKEAVGEKKEPQPSGPQPSGGAGGGGGKRRGKKEDS. Residues 85–99 show a composition bias toward basic and acidic residues; it reads KASEPKEAVGEKKEP. The residue at position 116 (Lys116) is an N6-succinyllysine. 2 consecutive transmembrane segments (helical) span residues 142–162 and 250–270; these read FRMY…YFVF and GSFL…LYTI. 8 residues coordinate ATP: Val309, Ala310, Thr351, Gly352, Lys353, Thr354, Leu355, and His489. Residue His573 participates in Zn(2+) binding. The active site involves Glu574. The Zn(2+) site is built by His577 and Asp648. The interval 759-802 is disordered; that stretch reads VEGTGSLDEDTSLPEGLQDWNKEREKEEKKEKEKEEPLNEKVVS. Basic and acidic residues predominate over residues 778 to 802; the sequence is WNKEREKEEKKEKEKEEPLNEKVVS.

In the N-terminal section; belongs to the AAA ATPase family. The protein in the C-terminal section; belongs to the peptidase M41 family. Homohexamer. Forms heterohexamers with SPG7 and AFG3L1. The m-AAA protease is either composed of homohexamers of AFG3L2 or heterohexamers of AFG3L1, AFG3L2 and/or SPG7. Interacts with MAIP1. Interacts with DNAJC19. Interacts with PHB2. Zn(2+) serves as cofactor. In terms of processing, upon import into the mitochondrion, the N-terminal transit peptide is cleaved to generate an intermediate form which undergoes autocatalytic proteolytic processing to generate the proteolytically active mature form. Highly expressed in the cerebellar Purkinje cells.

The protein resides in the mitochondrion inner membrane. It carries out the reaction ATP + H2O = ADP + phosphate + H(+). Functionally, catalytic component of the m-AAA protease, a protease that plays a key role in proteostasis of inner mitochondrial membrane proteins, and which is essential for axonal and neuron development. AFG3L2 possesses both ATPase and protease activities: the ATPase activity is required to unfold substrates, threading them into the internal proteolytic cavity for hydrolysis into small peptide fragments. The m-AAA protease carries out protein quality control in the inner membrane of the mitochondria by mediating degradation of mistranslated or misfolded polypeptides. The m-AAA protease complex also promotes the processing and maturation of mitochondrial proteins, such as MRPL32/bL32m, PINK1 and SP7. Mediates protein maturation of the mitochondrial ribosomal subunit MRPL32/bL32m by catalyzing the cleavage of the presequence of MRPL32/bL32m prior to assembly into the mitochondrial ribosome. Required for SPG7 maturation into its active mature form after SPG7 cleavage by mitochondrial-processing peptidase (MPP). Required for the maturation of PINK1 into its 52kDa mature form after its cleavage by mitochondrial-processing peptidase (MPP). Acts as a regulator of calcium in neurons by mediating degradation of SMDT1/EMRE before its assembly with the uniporter complex, limiting the availability of SMDT1/EMRE for MCU assembly and promoting efficient assembly of gatekeeper subunits with MCU. Promotes the proteolytic degradation of GHITM upon hyperpolarization of mitochondria: progressive GHITM degradation leads to respiratory complex I degradation and broad reshaping of the mitochondrial proteome by AFG3L2. Also acts as a regulator of mitochondrial glutathione homeostasis by mediating cleavage and degradation of SLC25A39. SLC25A39 cleavage is prevented when SLC25A39 binds iron-sulfur. Involved in the regulation of OMA1-dependent processing of OPA1. May act by mediating processing of OMA1 precursor, participating in OMA1 maturation. This Mus musculus (Mouse) protein is Mitochondrial inner membrane m-AAA protease component AFG3L2.